We begin with the raw amino-acid sequence, 192 residues long: Ion-translocating oxidoreductase complex subunit B (192 aa).

The segment at 1-26 (MNTIWIAVGALTLLGLVFGAILGYAS) is hydrophobic. The 60-residue stretch at 32 to 91 (EDDPVVEKIDAILPQSQCGQCGYPGCRPYAEAVGLQGEKINRCAPGGEAVMLKIAELLNV) folds into the 4Fe-4S domain. [4Fe-4S] cluster-binding residues include cysteine 49, cysteine 52, cysteine 57, cysteine 74, cysteine 117, cysteine 120, cysteine 123, cysteine 127, cysteine 147, cysteine 150, cysteine 153, and cysteine 157. 4Fe-4S ferredoxin-type domains follow at residues 108 to 137 (MLAV…GATR) and 138 to 167 (AMHT…LRPV).

Belongs to the 4Fe4S bacterial-type ferredoxin family. RnfB subfamily. The complex is composed of six subunits: RsxA, RsxB, RsxC, RsxD, RsxE and RsxG. The cofactor is [4Fe-4S] cluster.

It localises to the cell inner membrane. Functionally, part of a membrane-bound complex that couples electron transfer with translocation of ions across the membrane. Required to maintain the reduced state of SoxR. This is Ion-translocating oxidoreductase complex subunit B from Salmonella dublin (strain CT_02021853).